We begin with the raw amino-acid sequence, 374 residues long: Chaperone protein DnaJ (374 aa).

The region spanning 5 to 70 (DYYEVLGVER…NKRAAYDQYG (66 aa)) is the J domain. A CR-type zinc finger spans residues 133–211 (GTSVNIRVPT…CHGEGRVEEY (79 aa)). The Zn(2+) site is built by Cys146, Cys149, Cys163, Cys166, Cys185, Cys188, Cys199, and Cys202. CXXCXGXG motif repeat units lie at residues 146 to 153 (CKPCDGSG), 163 to 170 (CPTCGGIG), 185 to 192 (CPRCHGQG), and 199 to 206 (CDSCHGEG).

Belongs to the DnaJ family. As to quaternary structure, homodimer. Requires Zn(2+) as cofactor.

Its subcellular location is the cytoplasm. Functionally, participates actively in the response to hyperosmotic and heat shock by preventing the aggregation of stress-denatured proteins and by disaggregating proteins, also in an autonomous, DnaK-independent fashion. Unfolded proteins bind initially to DnaJ; upon interaction with the DnaJ-bound protein, DnaK hydrolyzes its bound ATP, resulting in the formation of a stable complex. GrpE releases ADP from DnaK; ATP binding to DnaK triggers the release of the substrate protein, thus completing the reaction cycle. Several rounds of ATP-dependent interactions between DnaJ, DnaK and GrpE are required for fully efficient folding. Also involved, together with DnaK and GrpE, in the DNA replication of plasmids through activation of initiation proteins. In Pseudomonas fluorescens (strain SBW25), this protein is Chaperone protein DnaJ.